The primary structure comprises 123 residues: Small ribosomal subunit protein uS13 (123 aa).

Residues 94–123 (AGLPVRGQRTKTNARTRKGPKKTVGVQRKK) are disordered. A compositionally biased stretch (basic residues) spans 101 to 123 (QRTKTNARTRKGPKKTVGVQRKK).

The protein belongs to the universal ribosomal protein uS13 family. In terms of assembly, part of the 30S ribosomal subunit. Forms a loose heterodimer with protein S19. Forms two bridges to the 50S subunit in the 70S ribosome.

Located at the top of the head of the 30S subunit, it contacts several helices of the 16S rRNA. In the 70S ribosome it contacts the 23S rRNA (bridge B1a) and protein L5 of the 50S subunit (bridge B1b), connecting the 2 subunits; these bridges are implicated in subunit movement. Contacts the tRNAs in the A and P-sites. The chain is Small ribosomal subunit protein uS13 from Acetivibrio thermocellus (strain ATCC 27405 / DSM 1237 / JCM 9322 / NBRC 103400 / NCIMB 10682 / NRRL B-4536 / VPI 7372) (Clostridium thermocellum).